Consider the following 281-residue polypeptide: Inhibitor of growth protein 2 (281 aa).

Residues 49–101 (VLRELDNKYQETLKEIDDVYEKYKKEDDSNQKKRLQQHLQRALINSQELGDEK) adopt a coiled-coil conformation. The segment at 123–204 (SQCFQDPAES…AKQEREASPV (82 aa)) is disordered. Residues 131-141 (ESERASDKSKM) show a composition bias toward basic and acidic residues. Positions 182-194 (KRSKSAKKKKRSK) are enriched in basic residues. K196 is covalently cross-linked (Glycyl lysine isopeptide (Lys-Gly) (interchain with G-Cter in SUMO1)). The PHD-type zinc finger occupies 213-262 (PTYCLCNQVSYGEMIGCDNEQCPIEWFHFSCVSLTYKPKGKWYCPKCRGD). Positions 216, 218, 229, 234, 240, 243, 256, and 259 each coordinate Zn(2+). Basic and acidic residues predominate over residues 261–275 (GDNEKTMDKSTEKTK). The disordered stretch occupies residues 261 to 281 (GDNEKTMDKSTEKTKKERRAR). The tract at residues 265–281 (KTMDKSTEKTKKERRAR) is PBR.

Belongs to the ING family. Interacts with H3K4me3 and to a lesser extent with H3K4me2. Component of a mSin3A-like complex at least consisting of SIN3A, HDAC1, HDAC2, RBBP4/RbAp48, RBBP7/RbAp46, SAP30 and ING2. Sumoylation enhances its association with SIN3A and is required for binding to some target gene promoters, this is the case for TMEM71.

The protein resides in the nucleus. In terms of biological role, seems to be involved in p53/TP53 activation and p53/TP53-dependent apoptotic pathways, probably by enhancing acetylation of p53/TP53. Component of a mSin3A-like corepressor complex, which is probably involved in deacetylation of nucleosomal histones. ING2 activity seems to be modulated by binding to phosphoinositides (PtdInsPs). This Mus musculus (Mouse) protein is Inhibitor of growth protein 2 (Ing2).